Reading from the N-terminus, the 212-residue chain is MKGKFIVIEGIDGCGKTTQINELSKWLPKSGLIKKGSKLITTREPGGSLLGKKLRGLILDNNKTNKPSSLAELLLYSADRAEHISKIISPALNNNDWVISDRFSDSTLAYQGYGRKINLEIIKKVESIVCQGEYPDLTFFLEISPEESIMRRKNEIPDRIESEGIRFLEKVNEGFKLIAREKKWKVISASQNIKTISNQIKETLLNNFSNDK.

10-17 (GIDGCGKT) contributes to the ATP binding site.

It belongs to the thymidylate kinase family.

The enzyme catalyses dTMP + ATP = dTDP + ADP. Functionally, phosphorylation of dTMP to form dTDP in both de novo and salvage pathways of dTTP synthesis. The sequence is that of Thymidylate kinase from Prochlorococcus marinus (strain MIT 9312).